The following is a 290-amino-acid chain: Acetylglutamate kinase (290 aa).

Residues Gly-65–Gly-66, Arg-87, and Asn-186 each bind substrate.

It belongs to the acetylglutamate kinase family. ArgB subfamily.

Its subcellular location is the cytoplasm. It carries out the reaction N-acetyl-L-glutamate + ATP = N-acetyl-L-glutamyl 5-phosphate + ADP. The protein operates within amino-acid biosynthesis; L-arginine biosynthesis; N(2)-acetyl-L-ornithine from L-glutamate: step 2/4. Functionally, catalyzes the ATP-dependent phosphorylation of N-acetyl-L-glutamate. The sequence is that of Acetylglutamate kinase from Mycobacterium sp. (strain KMS).